The following is a 75-amino-acid chain: Transaldolase (75 aa).

The protein belongs to the transaldolase family. Type 1 subfamily. In terms of assembly, homodimer. In terms of processing, phosphorylated. Predominantly expressed in Y-organs.

The protein localises to the cytoplasm. It catalyses the reaction D-sedoheptulose 7-phosphate + D-glyceraldehyde 3-phosphate = D-erythrose 4-phosphate + beta-D-fructose 6-phosphate. It functions in the pathway carbohydrate degradation; pentose phosphate pathway; D-glyceraldehyde 3-phosphate and beta-D-fructose 6-phosphate from D-ribose 5-phosphate and D-xylulose 5-phosphate (non-oxidative stage): step 2/3. Transaldolase is important for the balance of metabolites in the pentose-phosphate pathway. May play a role in the conversion of sterols into ecdysteroids via NADPH. This is Transaldolase from Carcinus maenas (Common shore crab).